The following is a 646-amino-acid chain: Chaperone protein DnaK (646 aa).

Threonine 197 bears the Phosphothreonine; by autocatalysis mark. Positions 599–646 (QQGAQAGADPNAGSSQGAQAGTDYGTSGPKTGTADDVDYEVVNDDNDK) are disordered. Polar residues predominate over residues 610 to 628 (AGSSQGAQAGTDYGTSGPK). Positions 633–646 (DDVDYEVVNDDNDK) are enriched in acidic residues.

The protein belongs to the heat shock protein 70 family.

In terms of biological role, acts as a chaperone. The sequence is that of Chaperone protein DnaK from Treponema denticola (strain ATCC 35405 / DSM 14222 / CIP 103919 / JCM 8153 / KCTC 15104).